The sequence spans 233 residues: Protein-methionine-sulfoxide reductase heme-binding subunit MsrQ (233 aa).

A run of 6 helical transmembrane segments spans residues isoleucine 13 to tryptophan 33, alanine 44 to serine 64, methionine 81 to aspartate 101, proline 117 to serine 137, serine 151 to valine 171, and valine 174 to valine 194. The 115-residue stretch at glycine 50–valine 164 folds into the Ferric oxidoreductase domain.

The protein belongs to the MsrQ family. As to quaternary structure, heterodimer of a catalytic subunit (MsrP) and a heme-binding subunit (MsrQ).

Its subcellular location is the cell inner membrane. Part of the MsrPQ system that repairs oxidized periplasmic proteins containing methionine sulfoxide residues (Met-O), using respiratory chain electrons. Thus protects these proteins from oxidative-stress damage caused by reactive species of oxygen and chlorine generated by the host defense mechanisms. MsrPQ is essential for the maintenance of envelope integrity under bleach stress, rescuing a wide series of structurally unrelated periplasmic proteins from methionine oxidation. MsrQ provides electrons for reduction to the reductase catalytic subunit MsrP, using the quinone pool of the respiratory chain. Probably involved in protection against reactive chlorine species (RCS) generated by chlorite and hypochlorite. This is Protein-methionine-sulfoxide reductase heme-binding subunit MsrQ from Azospira oryzae (strain ATCC BAA-33 / DSM 13638 / PS) (Dechlorosoma suillum).